We begin with the raw amino-acid sequence, 148 residues long: Deoxyuridine 5'-triphosphate nucleotidohydrolase (148 aa).

DUMP-binding residues include serine 69, glycine 82, aspartate 85, tyrosine 88, arginine 137, phenylalanine 142, and glycine 143.

The protein belongs to the dUTPase family. Homotrimer. Mg(2+) serves as cofactor.

It carries out the reaction dUTP + H2O = dUMP + diphosphate + H(+). The protein operates within pyrimidine metabolism; dUMP biosynthesis; dUMP from dCTP (dUTP route): step 2/2. Involved in nucleotide metabolism via production of dUMP, the immediate precursor of thymidine nucleotides, and decreases the intracellular concentration of dUTP so that uracil cannot be incorporated into DNA. This Kluyveromyces lactis (strain ATCC 8585 / CBS 2359 / DSM 70799 / NBRC 1267 / NRRL Y-1140 / WM37) (Yeast) protein is Deoxyuridine 5'-triphosphate nucleotidohydrolase (DUT1).